Reading from the N-terminus, the 342-residue chain is N-acetyl-gamma-glutamyl-phosphate reductase (342 aa).

The active site involves cysteine 149.

This sequence belongs to the NAGSA dehydrogenase family. Type 1 subfamily.

The protein localises to the cytoplasm. The enzyme catalyses N-acetyl-L-glutamate 5-semialdehyde + phosphate + NADP(+) = N-acetyl-L-glutamyl 5-phosphate + NADPH + H(+). The protein operates within amino-acid biosynthesis; L-arginine biosynthesis; N(2)-acetyl-L-ornithine from L-glutamate: step 3/4. Its function is as follows. Catalyzes the NADPH-dependent reduction of N-acetyl-5-glutamyl phosphate to yield N-acetyl-L-glutamate 5-semialdehyde. In Nitrosomonas europaea (strain ATCC 19718 / CIP 103999 / KCTC 2705 / NBRC 14298), this protein is N-acetyl-gamma-glutamyl-phosphate reductase.